Here is an 89-residue protein sequence, read N- to C-terminus: Small ribosomal subunit protein uS15 (89 aa).

The protein belongs to the universal ribosomal protein uS15 family. In terms of assembly, part of the 30S ribosomal subunit. Forms a bridge to the 50S subunit in the 70S ribosome, contacting the 23S rRNA.

Functionally, one of the primary rRNA binding proteins, it binds directly to 16S rRNA where it helps nucleate assembly of the platform of the 30S subunit by binding and bridging several RNA helices of the 16S rRNA. Its function is as follows. Forms an intersubunit bridge (bridge B4) with the 23S rRNA of the 50S subunit in the ribosome. This Rhizobium rhizogenes (strain K84 / ATCC BAA-868) (Agrobacterium radiobacter) protein is Small ribosomal subunit protein uS15.